Consider the following 463-residue polypeptide: L-seryl-tRNA(Sec) selenium transferase (463 aa).

Lys-295 bears the N6-(pyridoxal phosphate)lysine mark.

The protein belongs to the SelA family. In terms of assembly, homodecamer; pentamer of dimers. Binds only one seryl-tRNA(Sec) per dimer. Requires pyridoxal 5'-phosphate as cofactor.

The protein localises to the cytoplasm. The catalysed reaction is L-seryl-tRNA(Sec) + selenophosphate + H(+) = L-selenocysteinyl-tRNA(Sec) + phosphate. Its pathway is aminoacyl-tRNA biosynthesis; selenocysteinyl-tRNA(Sec) biosynthesis; selenocysteinyl-tRNA(Sec) from L-seryl-tRNA(Sec) (bacterial route): step 1/1. Converts seryl-tRNA(Sec) to selenocysteinyl-tRNA(Sec) required for selenoprotein biosynthesis. The sequence is that of L-seryl-tRNA(Sec) selenium transferase from Shigella dysenteriae serotype 1 (strain Sd197).